A 248-amino-acid chain; its full sequence is Non-specific acid phosphatase (248 aa).

The first 20 residues, 1–20 (MKKLLAVFCAGAFVSTSVFA), serve as a signal peptide directing secretion.

This sequence belongs to the class A bacterial acid phosphatase family.

The protein localises to the periplasm. The catalysed reaction is a phosphate monoester + H2O = an alcohol + phosphate. The chain is Non-specific acid phosphatase (phoN) from Providencia stuartii.